The sequence spans 641 residues: Chaperone protein DnaK 2 (641 aa).

At T199 the chain carries Phosphothreonine; by autocatalysis. Positions 601–616 (MAQQQAQAQHAQSSQQ) are enriched in low complexity. The tract at residues 601 to 641 (MAQQQAQAQHAQSSQQTNDTTGQSSTDDDVFEAEFEEVKDK) is disordered. A compositionally biased stretch (acidic residues) spans 626–635 (TDDDVFEAEF).

It belongs to the heat shock protein 70 family.

Functionally, acts as a chaperone. The protein is Chaperone protein DnaK 2 of Photobacterium profundum (strain SS9).